Here is an 81-residue protein sequence, read N- to C-terminus: Photosystem I iron-sulfur center (81 aa).

2 4Fe-4S ferredoxin-type domains span residues 2–31 and 39–68; these read SHTV…MVPW and IASS…IRVY. [4Fe-4S] cluster-binding residues include cysteine 11, cysteine 14, cysteine 17, cysteine 21, cysteine 48, cysteine 51, cysteine 54, and cysteine 58.

In terms of assembly, the cyanobacterial PSI reaction center is composed of one copy each of PsaA,B,C,D,E,F,I,J,K,L,M and X, and forms trimeric complexes. Requires [4Fe-4S] cluster as cofactor.

It is found in the cellular thylakoid membrane. It carries out the reaction reduced [plastocyanin] + hnu + oxidized [2Fe-2S]-[ferredoxin] = oxidized [plastocyanin] + reduced [2Fe-2S]-[ferredoxin]. In terms of biological role, apoprotein for the two 4Fe-4S centers FA and FB of photosystem I (PSI); essential for photochemical activity. FB is the terminal electron acceptor of PSI, donating electrons to ferredoxin. The C-terminus interacts with PsaA/B/D and helps assemble the protein into the PSI complex. Required for binding of PsaD and PsaE to PSI. PSI is a plastocyanin/cytochrome c6-ferredoxin oxidoreductase, converting photonic excitation into a charge separation, which transfers an electron from the donor P700 chlorophyll pair to the spectroscopically characterized acceptors A0, A1, FX, FA and FB in turn. The chain is Photosystem I iron-sulfur center from Microchaete diplosiphon (Fremyella diplosiphon).